The sequence spans 303 residues: ATP phosphoribosyltransferase (303 aa).

It belongs to the ATP phosphoribosyltransferase family. Long subfamily. Mg(2+) serves as cofactor.

Its subcellular location is the cytoplasm. The catalysed reaction is 1-(5-phospho-beta-D-ribosyl)-ATP + diphosphate = 5-phospho-alpha-D-ribose 1-diphosphate + ATP. Its pathway is amino-acid biosynthesis; L-histidine biosynthesis; L-histidine from 5-phospho-alpha-D-ribose 1-diphosphate: step 1/9. Its activity is regulated as follows. Feedback inhibited by histidine. Functionally, catalyzes the condensation of ATP and 5-phosphoribose 1-diphosphate to form N'-(5'-phosphoribosyl)-ATP (PR-ATP). Has a crucial role in the pathway because the rate of histidine biosynthesis seems to be controlled primarily by regulation of HisG enzymatic activity. This Haemophilus influenzae (strain PittEE) protein is ATP phosphoribosyltransferase.